A 348-amino-acid polypeptide reads, in one-letter code: Endoplasmic reticulum junction formation protein lunapark-A (348 aa).

The Cytoplasmic portion of the chain corresponds to M1–R43. Residues L44–L64 traverse the membrane as a helical segment. Residues P65–Q67 are Lumenal-facing. A helical membrane pass occupies residues L68–L88. Residues R89–D348 lie on the Cytoplasmic side of the membrane. Residues F105–T126 are a coiled coil. Residues K142–R211 are disordered. The segment at C277–C302 adopts a C4-type; plays a role in ER morphology zinc-finger fold. A disordered region spans residues P313–D348. Basic and acidic residues predominate over residues E339–D348.

This sequence belongs to the lunapark family. Homodimer; homodimerization requires the C4-type zinc finger motif and decreases during mitosis in a phosphorylation-dependent manner. In terms of processing, phosphorylated. Phosphorylation occurs during interphase. Phosphorylation also occurs during mitosis; these phosphorylations reduce both its homodimerization and the ER three-way tubular junction formation.

It is found in the endoplasmic reticulum membrane. Functionally, endoplasmic reticulum (ER)-shaping membrane protein that plays a role in determining ER morphology. Involved in the stabilization of nascent three-way ER tubular junctions within the ER network. May also play a role as a curvature-stabilizing protein within three-way ER tubular junction network. In Takifugu rubripes (Japanese pufferfish), this protein is Endoplasmic reticulum junction formation protein lunapark-A (lnpka).